Here is a 315-residue protein sequence, read N- to C-terminus: Ribosomal protein L11 methyltransferase (315 aa).

S-adenosyl-L-methionine-binding residues include Thr-163, Gly-184, Asp-206, and Asn-248.

Belongs to the methyltransferase superfamily. PrmA family.

The protein localises to the cytoplasm. The enzyme catalyses L-lysyl-[protein] + 3 S-adenosyl-L-methionine = N(6),N(6),N(6)-trimethyl-L-lysyl-[protein] + 3 S-adenosyl-L-homocysteine + 3 H(+). Methylates ribosomal protein L11. In Lacticaseibacillus paracasei (strain ATCC 334 / BCRC 17002 / CCUG 31169 / CIP 107868 / KCTC 3260 / NRRL B-441) (Lactobacillus paracasei), this protein is Ribosomal protein L11 methyltransferase.